Reading from the N-terminus, the 77-residue chain is Blood-induced peptide 1 (77 aa).

The stretch at 38 to 71 forms a coiled coil; it reads EDFLHQENSELKKSLKNLEMENEKLKNILKTDYN.

Plays an important role in survival in host blood through increasing tolerance to stresses such as heat, salt, or cycloheximide, which is essential for virulence. This is Blood-induced peptide 1 from Candida albicans (strain SC5314 / ATCC MYA-2876) (Yeast).